Here is a 340-residue protein sequence, read N- to C-terminus: Lipoate--protein ligase 2 (340 aa).

A BPL/LPL catalytic domain is found at 31 to 222; that stretch reads FLDEDILFPY…QILGIDDIKE (192 aa). ATP contacts are provided by residues R73, 78–81, K136, and A140; that span reads GAVY. Position 136 (K136) interacts with (R)-lipoate. The stretch at 293–321 forms a coiled coil; the sequence is QGDIKDVEEALQGTKMTREDLMHQLKQLD.

It belongs to the LplA family.

The enzyme catalyses L-lysyl-[lipoyl-carrier protein] + (R)-lipoate + ATP = N(6)-[(R)-lipoyl]-L-lysyl-[lipoyl-carrier protein] + AMP + diphosphate + H(+). It functions in the pathway protein modification; protein lipoylation via exogenous pathway; protein N(6)-(lipoyl)lysine from lipoate: step 1/2. Its pathway is protein modification; protein lipoylation via exogenous pathway; protein N(6)-(lipoyl)lysine from lipoate: step 2/2. Catalyzes specifically the lipoylation of GcvH-L (SAV0324), likely via the ATP-dependent activation of lipoate to lipoyl-AMP and the transfer of the activated lipoyl onto the lipoyl domain of the target protein. Can also utilize lipoamide as substrate for GcvH-L modification. The polypeptide is Lipoate--protein ligase 2 (Staphylococcus aureus (strain Mu50 / ATCC 700699)).